A 131-amino-acid chain; its full sequence is Maturin (131 aa).

At Tyr34 the chain carries Phosphotyrosine. The segment covering 107–120 has biased composition (acidic residues); it reads FEEYSADVEEEEPE. The segment at 107 to 131 is disordered; that stretch reads FEEYSADVEEEEPEADHPQMGVSQQ.

Belongs to the MTURN family. Phosphorylation at Tyr-34 is essential for its ability to promote megakaryocyte differentiation. Expressed in the thymus, bone marrow and spleen.

Its subcellular location is the cytoplasm. In terms of biological role, promotes megakaryocyte differentiation by enhancing ERK and JNK signaling as well as up-regulating RUNX1 and FLI1 expression. Represses NF-kappa-B transcriptional activity by inhibiting phosphorylation of RELA at 'Ser- 536'. May be involved in early neuronal development. The polypeptide is Maturin (Mturn) (Mus musculus (Mouse)).